Consider the following 77-residue polypeptide: Acyl carrier protein (77 aa).

Positions 1–76 (MATFDDVKAV…DVVNYIDNLK (76 aa)) constitute a Carrier domain. Ser-36 carries the post-translational modification O-(pantetheine 4'-phosphoryl)serine.

It belongs to the acyl carrier protein (ACP) family. In terms of processing, 4'-phosphopantetheine is transferred from CoA to a specific serine of apo-ACP by AcpS. This modification is essential for activity because fatty acids are bound in thioester linkage to the sulfhydryl of the prosthetic group.

The protein resides in the cytoplasm. It functions in the pathway lipid metabolism; fatty acid biosynthesis. In terms of biological role, carrier of the growing fatty acid chain in fatty acid biosynthesis. This chain is Acyl carrier protein, found in Campylobacter jejuni (strain RM1221).